The chain runs to 384 residues: F-box/kelch-repeat protein At1g64840 (384 aa).

The 49-residue stretch at 3-51 folds into the F-box domain; the sequence is PNWSQLPEELLNLISKNLDNCFDVVHARSICRSWRSAFPFPSSLSTLSY. Kelch repeat units follow at residues 87–137 and 259–309; these read PEYF…PLGF and NPFP…CCSA.

This chain is F-box/kelch-repeat protein At1g64840, found in Arabidopsis thaliana (Mouse-ear cress).